Reading from the N-terminus, the 784-residue chain is Toll-like receptor 2 (784 aa).

The first 20 residues, Met-1–Gly-20, serve as a signal peptide directing secretion. At Ala-21–Arg-587 the chain is on the extracellular side. An intrachain disulfide couples Cys-30 to Cys-36. LRR repeat units lie at residues Val-54–Asn-77, Leu-78–Asn-101, Leu-102–Val-125, Leu-126–Asn-150, Leu-151–Phe-175, Leu-176–Asn-199, Ile-200–Ser-223, Leu-224–Ser-250, Val-251–Gly-278, Ile-279–Asn-308, Val-309–Lys-337, Val-338–Ser-361, Leu-362–Val-388, Leu-389–Asn-414, Leu-415–Lys-437, Met-438–Gln-457, Thr-458–Gln-478, Leu-479–Val-500, and Leu-501–Gln-524. Asn-114 carries an N-linked (GlcNAc...) asparagine glycan. A glycan (N-linked (GlcNAc...) asparagine) is linked at Asn-199. The N-linked (GlcNAc...) asparagine glycan is linked to Asn-248. Cys-353 and Cys-382 are disulfide-bonded. Cys-432 and Cys-454 are joined by a disulfide. N-linked (GlcNAc...) asparagine glycosylation is present at Asn-442. The LRRCT domain maps to Leu-525–Arg-579. The chain crosses the membrane as a helical span at residues Ala-588 to Leu-608. Residues Cys-609 to Ser-784 lie on the Cytoplasmic side of the membrane. The TIR domain maps to Leu-639–Ile-782. Residue Lys-754 forms a Glycyl lysine isopeptide (Lys-Gly) (interchain with G-Cter in ubiquitin) linkage. The ATG16L1-binding motif motif lies at Tyr-761–Leu-778.

It belongs to the Toll-like receptor family. Interacts with LY96, TLR1 and TLR6 (via extracellular domain). TLR2 seems to exist in heterodimers with either TLR1 or TLR6 before stimulation by the ligand. The heterodimers form bigger oligomers in response to their corresponding ligands as well as further heterotypic associations with other receptors such as CD14 and/or CD36. Binds MYD88 (via TIR domain). Interacts with TICAM1. Interacts with CNPY3. Interacts with ATG16L1. Interacts with PPP1R11. Interacts with TICAM2. Interacts with TIRAP. Post-translationally, ubiquitinated at Lys-754 by PPP1R11, leading to its degradation. Deubiquitinated by USP2. In terms of processing, glycosylation of Asn-442 is critical for secretion of the N-terminal ectodomain of TLR2.

The protein resides in the membrane. It is found in the cytoplasmic vesicle. It localises to the phagosome membrane. The protein localises to the membrane raft. Functionally, cooperates with LY96 to mediate the innate immune response to bacterial lipoproteins and other microbial cell wall components. Cooperates with TLR1 or TLR6 to mediate the innate immune response to bacterial lipoproteins or lipopeptides. Acts via MYD88 and TRAF6, leading to NF-kappa-B activation, cytokine secretion and the inflammatory response. May also promote apoptosis in response to lipoproteins. Forms activation clusters composed of several receptors depending on the ligand, these clusters trigger signaling from the cell surface and subsequently are targeted to the Golgi in a lipid-raft dependent pathway. Forms the cluster TLR2:TLR6:CD14:CD36 in response to diacylated lipopeptides and TLR2:TLR1:CD14 in response to triacylated lipopeptides. This Ovis aries (Sheep) protein is Toll-like receptor 2 (TLR2).